A 145-amino-acid polypeptide reads, in one-letter code: Antimicrobial peptide NK-lysin (145 aa).

An N-terminal signal peptide occupies residues 1 to 22; sequence MTSRALLLLASALLGTPGLTFS. Residues 23–62 constitute a propeptide that is removed on maturation; the sequence is GLNPESYDLATAHLSDGEQFCQGLTQEDLQGDLLTERERQ. The region spanning 62-142 is the Saposin B-type domain; it reads QGIACWSCRK…VDIKLCKHKA (81 aa). Cystine bridges form between C66/C138, C69/C132, and C97/C107. Positions 141 to 145 are excised as a propeptide; that stretch reads KAGLI.

Its subcellular location is the secreted. May be an effector molecule of cytotoxic activity. Has antimicrobial activity. The polypeptide is Antimicrobial peptide NK-lysin (NKL) (Equus caballus (Horse)).